A 246-amino-acid polypeptide reads, in one-letter code: UDP-2,3-diacylglucosamine hydrolase (246 aa).

Residues Asp-8, His-10, Asp-41, Asn-79, and His-114 each coordinate Mn(2+). 79 to 80 (NR) is a substrate binding site. 5 residues coordinate substrate: Asp-122, Ser-160, Lys-164, Lys-167, and His-195. The Mn(2+) site is built by His-195 and His-197.

It belongs to the LpxH family. The cofactor is Mn(2+).

It localises to the cell inner membrane. It carries out the reaction UDP-2-N,3-O-bis[(3R)-3-hydroxytetradecanoyl]-alpha-D-glucosamine + H2O = 2-N,3-O-bis[(3R)-3-hydroxytetradecanoyl]-alpha-D-glucosaminyl 1-phosphate + UMP + 2 H(+). The protein operates within glycolipid biosynthesis; lipid IV(A) biosynthesis; lipid IV(A) from (3R)-3-hydroxytetradecanoyl-[acyl-carrier-protein] and UDP-N-acetyl-alpha-D-glucosamine: step 4/6. Functionally, hydrolyzes the pyrophosphate bond of UDP-2,3-diacylglucosamine to yield 2,3-diacylglucosamine 1-phosphate (lipid X) and UMP by catalyzing the attack of water at the alpha-P atom. Involved in the biosynthesis of lipid A, a phosphorylated glycolipid that anchors the lipopolysaccharide to the outer membrane of the cell. This Tolumonas auensis (strain DSM 9187 / NBRC 110442 / TA 4) protein is UDP-2,3-diacylglucosamine hydrolase.